The following is a 215-amino-acid chain: Sperm acrosome membrane-associated protein 3 (215 aa).

The Cytoplasmic portion of the chain corresponds to 1-63 (MVSALRGAPL…EARSRALRRR (63 aa)). The helical; Signal-anchor for type II membrane protein transmembrane segment at 64 to 84 (WCPAGIMLLALVCLLSCLLPS) threads the bilayer. Topologically, residues 85 to 215 (SEAKLYGRCE…LTEWVDGCDF (131 aa)) are extracellular. Positions 88 to 215 (KLYGRCELAR…LTEWVDGCDF (128 aa)) constitute a C-type lysozyme domain. Intrachain disulfides connect Cys93/Cys213, Cys117/Cys201, Cys151/Cys166, and Cys162/Cys180.

Belongs to the glycosyl hydrolase 22 family. In terms of assembly, interacts with ASTL. In terms of processing, the processed form derives from the membrane form by proteolytic processing. The processed form is expressed in sperm (at protein level). Expressed in testis, epididymis and placenta.

Its subcellular location is the cytoplasmic vesicle. The protein localises to the secretory vesicle. The protein resides in the acrosome membrane. It is found in the secreted. Functionally, sperm surface membrane protein that may be involved in sperm-egg plasma membrane adhesion and fusion during fertilization. It could be a potential receptor for the egg oligosaccharide residue N-acetylglucosamine, which is present in the extracellular matrix over the egg plasma membrane. The processed form has no detectable bacteriolytic activity in vitro. The sequence is that of Sperm acrosome membrane-associated protein 3 (SPACA3) from Homo sapiens (Human).